The primary structure comprises 41 residues: Probable cinnamyl alcohol dehydrogenase 2 (41 aa).

It belongs to the zinc-containing alcohol dehydrogenase family. It depends on Zn(2+) as a cofactor.

It catalyses the reaction (E)-cinnamyl alcohol + NADP(+) = (E)-cinnamaldehyde + NADPH + H(+). It carries out the reaction (E)-coniferol + NADP(+) = (E)-coniferaldehyde + NADPH + H(+). The catalysed reaction is (E)-sinapyl alcohol + NADP(+) = (E)-sinapaldehyde + NADPH + H(+). The enzyme catalyses (E)-4-coumaroyl alcohol + NADP(+) = (E)-4-coumaraldehyde + NADPH + H(+). It catalyses the reaction (E)-caffeyl alcohol + NADP(+) = (E)-caffeyl aldehyde + NADPH + H(+). The protein operates within aromatic compound metabolism; phenylpropanoid biosynthesis. Involved in lignin biosynthesis. Catalyzes the final step specific for the production of lignin monomers, like coniferyl alcohol, sinapyl alcohol and 4-coumaryl alcohol. The chain is Probable cinnamyl alcohol dehydrogenase 2 from Pseudotsuga menziesii (Douglas-fir).